We begin with the raw amino-acid sequence, 314 residues long: Protoheme IX farnesyltransferase (314 aa).

8 helical membrane passes run Val-31–His-51, Pro-52–Leu-72, Ile-119–Ile-139, Ile-152–Gly-172, Leu-179–Phe-199, Ile-225–Phe-245, Ala-247–Val-267, and Phe-284–Phe-304.

This sequence belongs to the UbiA prenyltransferase family. Protoheme IX farnesyltransferase subfamily.

The protein localises to the cell inner membrane. It catalyses the reaction heme b + (2E,6E)-farnesyl diphosphate + H2O = Fe(II)-heme o + diphosphate. Its pathway is porphyrin-containing compound metabolism; heme O biosynthesis; heme O from protoheme: step 1/1. Functionally, converts heme B (protoheme IX) to heme O by substitution of the vinyl group on carbon 2 of heme B porphyrin ring with a hydroxyethyl farnesyl side group. In Bradyrhizobium diazoefficiens (strain JCM 10833 / BCRC 13528 / IAM 13628 / NBRC 14792 / USDA 110), this protein is Protoheme IX farnesyltransferase.